Here is a 315-residue protein sequence, read N- to C-terminus: Transcription antitermination protein NusB (315 aa).

Residues 296–315 are disordered; sequence SANFDTKSAELNDADEKSQD. Basic and acidic residues predominate over residues 302–315; that stretch reads KSAELNDADEKSQD.

This sequence belongs to the NusB family.

Its function is as follows. Involved in transcription antitermination. Required for transcription of ribosomal RNA (rRNA) genes. Binds specifically to the boxA antiterminator sequence of the ribosomal RNA (rrn) operons. This Psychrobacter cryohalolentis (strain ATCC BAA-1226 / DSM 17306 / VKM B-2378 / K5) protein is Transcription antitermination protein NusB.